Here is a 340-residue protein sequence, read N- to C-terminus: TD and POZ domain-containing protein 5 (340 aa).

One can recognise an MATH domain in the interval 19–149; it reads EFCYVWTIRN…ENKLTLCCKV (131 aa). One can recognise a BTB domain in the interval 188–255; sequence TDCCLLVAGH…IYTGKAPHLQ (68 aa).

The protein belongs to the Tdpoz family.

In Mus musculus (Mouse), this protein is TD and POZ domain-containing protein 5.